A 314-amino-acid polypeptide reads, in one-letter code: Ribose-phosphate pyrophosphokinase (314 aa).

ATP-binding positions include 37 to 39 (DGE) and 96 to 97 (RQ). Positions 131 and 170 each coordinate Mg(2+). The active site involves K194. D-ribose 5-phosphate contacts are provided by residues R196, D220, and 224–228 (DTGGT).

It belongs to the ribose-phosphate pyrophosphokinase family. Class I subfamily. As to quaternary structure, homohexamer. Mg(2+) is required as a cofactor.

It is found in the cytoplasm. It catalyses the reaction D-ribose 5-phosphate + ATP = 5-phospho-alpha-D-ribose 1-diphosphate + AMP + H(+). It functions in the pathway metabolic intermediate biosynthesis; 5-phospho-alpha-D-ribose 1-diphosphate biosynthesis; 5-phospho-alpha-D-ribose 1-diphosphate from D-ribose 5-phosphate (route I): step 1/1. Functionally, involved in the biosynthesis of the central metabolite phospho-alpha-D-ribosyl-1-pyrophosphate (PRPP) via the transfer of pyrophosphoryl group from ATP to 1-hydroxyl of ribose-5-phosphate (Rib-5-P). This is Ribose-phosphate pyrophosphokinase from Vibrio parahaemolyticus serotype O3:K6 (strain RIMD 2210633).